Reading from the N-terminus, the 914-residue chain is Solute carrier family 12 member 9 (914 aa).

At 1 to 36 (MASESSPLLAYRLLGEEGVALPANGAGGPGGASARK) the chain is on the cytoplasmic side. Phosphoserine is present on Ser6. A helical membrane pass occupies residues 37-57 (LSTFLGVVVPTVLSMFSIVVF). Topologically, residues 58–72 (LRIGFVVGHAGLLQA) are extracellular. A helical transmembrane segment spans residues 73-93 (LAMLLVAYFILALTVLSVCAI). The Cytoplasmic portion of the chain corresponds to 94–119 (ATNGAVQGGGAYFMISRTLGPEVGGS). A helical membrane pass occupies residues 120–140 (IGLMFYLANVCGCAVSLLGLV). Residues 141 to 167 (ESVLDVFGADATGPSGLRVLPQGYGWN) are Extracellular-facing. The helical transmembrane segment at 168 to 188 (LLYGSLLLGLVGGVCTLGAGL) threads the bilayer. The Cytoplasmic segment spans residues 189 to 193 (YARAS). The chain crosses the membrane as a helical span at residues 194 to 214 (FLTFLLVSGSLASVLISFVAV). Residues 215–262 (GPRDIRLTPRPGPNGSSLPPRFGHFTGFNSSTLKDNLGAGYAEDYTTG) lie on the Extracellular side of the membrane. N-linked (GlcNAc...) asparagine glycosylation is found at Asn228 and Asn243. A helical transmembrane segment spans residues 263 to 283 (AVMNFASVFAVLFNGCTGIMA). Residues 284 to 297 (GANMSGELKDPSRA) lie on the Cytoplasmic side of the membrane. A helical membrane pass occupies residues 298 to 318 (IPLGTIVAVAYTFFVYVLLFF). Over 319–338 (LSSFTCDRTLLQEDYGFFRA) the chain is Extracellular. Residues 339-359 (ISLWPPLVLIGIYATALSASM) form a helical membrane-spanning segment. The Cytoplasmic portion of the chain corresponds to 360–390 (SSLIGASRILHALARDDLFGVILAPAKVVSR). A helical transmembrane segment spans residues 391–411 (GGNPWAAVLYSWGLVQLVLLA). Topologically, residues 412 to 416 (GKLNT) are extracellular. Residues 417–437 (LAAVVTVFYLVAYAAVDLSCL) traverse the membrane as a helical segment. Topologically, residues 438–466 (SLEWASAPNFRPTFSLFSWHTCLLGVASC) are cytoplasmic. Residues 467 to 487 (LLMMFLISPGAAGGSLLLMGL) traverse the membrane as a helical segment. Residues 488 to 740 (LAALLTARGG…LLRPRGGPGY (253 aa)) are Extracellular-facing. Positions 642–678 (LTDPAFSEPADSTREGSSPALSTLFPPPRAPGSPRAL) are disordered. Residues 741-761 (VDVCGLFLLQMATILGMVPAW) form a helical membrane-spanning segment. Topologically, residues 762-914 (HSARLRIFLC…GVTPVTCTDL (153 aa)) are cytoplasmic. Residues 844–863 (QQGRGTGGGPGGPEGGDAEG) form a disordered region. Residues 847 to 858 (RGTGGGPGGPEG) show a composition bias toward gly residues.

The protein belongs to the SLC12A transporter family. As to quaternary structure, interacts with SLC12A1. In terms of tissue distribution, highly expressed in placenta, brain and kidney. Lower expression in lung, liver and heart.

The protein resides in the cell membrane. It is found in the lysosome membrane. Its function is as follows. May be an inhibitor of SLC12A1. Seems to correspond to a subunit of a multimeric transport system and thus, additional subunits may be required for its function. May play a role in lysosomal ion flux and osmoregulation. The chain is Solute carrier family 12 member 9 (SLC12A9) from Homo sapiens (Human).